The following is a 319-amino-acid chain: Aminoimidazole riboside kinase (319 aa).

Positions 16, 31, and 101 each coordinate 5-amino-1-(beta-D-ribosyl)imidazole. 158 to 160 is a binding site for ATP; the sequence is DVN. Arginine 162 lines the 5-amino-1-(beta-D-ribosyl)imidazole pocket. K(+) is bound by residues alanine 180, alanine 181, and alanine 183. The ATP site is built by lysine 187 and glutamate 192. Residue glycine 213 coordinates K(+). 220–225 provides a ligand contact to ATP; that stretch reads SLGADG. K(+)-binding residues include aspartate 246 and threonine 248. Aspartate 252 contacts 5-amino-1-(beta-D-ribosyl)imidazole. Aspartate 252 acts as the Proton acceptor in catalysis. An ATP-binding site is contributed by asparagine 281. Alanine 287, alanine 290, and glycine 292 together coordinate K(+).

It belongs to the carbohydrate kinase PfkB family. In terms of assembly, homodimer.

It carries out the reaction 5-amino-1-(beta-D-ribosyl)imidazole + ATP = 5-amino-1-(5-phospho-beta-D-ribosyl)imidazole + ADP + H(+). Potassium may regulate kinase activity. Functionally, phosphorylates 5-amino-1-(beta-D-ribosyl)imidazole (AIRs) to form 5-amino-1-(5-phospho-beta-D-ribosyl)imidazole (AIR), an important intermediate in the purine and thiamine biosynthetic pathways. It allows the use of exogenous aminoimidazole riboside (AIRs) to satisfy the cellular requirement for purines and thiamine. The protein is Aminoimidazole riboside kinase of Salmonella typhimurium (strain LT2 / SGSC1412 / ATCC 700720).